A 184-amino-acid polypeptide reads, in one-letter code: Thylakoid membrane protein slr0575 (184 aa).

2 helical membrane passes run 5–25 (ISLAAVGLTVGGILTITGFVA) and 31–51 (ATLNLAGFFYGIPLVLGGLAL).

Its subcellular location is the cellular thylakoid membrane. The protein is Thylakoid membrane protein slr0575 of Synechocystis sp. (strain ATCC 27184 / PCC 6803 / Kazusa).